The chain runs to 360 residues: uncharacterized protein (360 aa).

This is an uncharacterized protein from Escherichia coli (strain UTI89 / UPEC).